A 648-amino-acid polypeptide reads, in one-letter code: PAN2-PAN3 deadenylation complex subunit PAN3 (648 aa).

The interval 1-24 is disordered; sequence MAATRYPPNDLRRQVGSPRSKGRE. The C3H1-type zinc finger occupies 24–53; sequence ENKDTLCRNILIYGNCRYEDQGCTFNHDQN. Residues 244 to 506 are pseudokinase domain; sequence QVMPNSGLPQ…SIENFISGIA (263 aa). Residues Arg295, 345 to 352, and 404 to 405 contribute to the ATP site; these read DYHPLSKT and SK. The stretch at 507-545 forms a coiled coil; sequence THMTAFFDLALQDGDEKQFHLARELENGRIARSMMKLMT. The knob domain stretch occupies residues 546 to 648; the sequence is IIERAEPGGA…SKTGAPGANN (103 aa).

This sequence belongs to the protein kinase superfamily. PAN3 family. As to quaternary structure, homodimer. Forms a heterotrimer with a catalytic subunit PAN2 to form the poly(A)-nuclease (PAN) deadenylation complex. Interacts (via PAM-2 motif) with poly(A)-binding protein PAB1 (via PABC domain), conferring substrate specificity of the enzyme complex.

The protein resides in the cytoplasm. Functionally, regulatory subunit of the poly(A)-nuclease (PAN) deadenylation complex, one of two cytoplasmic mRNA deadenylases involved in mRNA turnover. PAN specifically shortens poly(A) tails of RNA and the activity is stimulated by poly(A)-binding protein PAB1. PAN deadenylation is followed by rapid degradation of the shortened mRNA tails by the CCR4-NOT complex. Deadenylated mRNAs are then degraded by two alternative mechanisms, namely exosome-mediated 3'-5' exonucleolytic degradation, or deadenylation-dependent mRNA decaping and subsequent 5'-3' exonucleolytic degradation by XRN1. May also be involved in post-transcriptional maturation of mRNA poly(A) tails. PAN3 acts as a positive regulator for PAN activity, recruiting the catalytic subunit PAN2 to mRNA via its interaction with RNA and with PAB1. In Chaetomium globosum (strain ATCC 6205 / CBS 148.51 / DSM 1962 / NBRC 6347 / NRRL 1970) (Soil fungus), this protein is PAN2-PAN3 deadenylation complex subunit PAN3.